A 607-amino-acid chain; its full sequence is Protein PLASTID MOVEMENT IMPAIRED 2 (607 aa).

Coiled coils occupy residues lysine 66–leucine 295 and methionine 329–arginine 445.

Belongs to the WEB family. In terms of assembly, interacts with WEB1. As to expression, ubiquitous but preferentially in chloroplast-containing tissues.

Its subcellular location is the cytoplasm. In terms of biological role, required for the chloroplast avoidance response under high intensity blue light. This avoidance response consists in the relocation of chloroplasts on the anticlinal side of exposed cells. Acts in association with WEB1 to maintain the velocity of chloroplast photorelocation movement via cp-actin filaments regulation. The chain is Protein PLASTID MOVEMENT IMPAIRED 2 (PMI2) from Arabidopsis thaliana (Mouse-ear cress).